The sequence spans 100 residues: Histone-like protein p6 (100 aa).

A DNA-binding region spans residues 1–19 (MRKMMQREVTYTTAQLARM).

The protein belongs to the phi29likevirus histone-like protein p6 family. In terms of assembly, homodimer. Homomultimer. Binds to double-stranded DNA giving rise to multimeric nucleoprotein complexes. Binding specificity for the viral DNA is based on supercoiling, the viral genome having a negative superhelicity lower than that of plasmid DNA. Interacts with the DNA replication protein p17; this interaction optimizes the binding of protein p6 at the viral DNA ends, thus favoring the initiation of replication.

Functionally, histone-like nucleoprotein that binds to the viral dsDNA and responsible for wrapping and compacting the viral DNA about 4-fold. Forms a nucleoprotein complex in which the DNA adopts a right-handed toroidal conformation winding around a protein core. Binds ito most, if not all, the viral genome, although with different affinity, the highest one corresponding to the genome ends. The formation of the nucleoprotein complex at the genome ends, activates the initiation of viral DNA replication. The binding of p6 would recruit the complex formed by the TP and the DNA polymerase to the origin. Protein p6 also represses early transcription from promoter C2, and, together with protein p4, represses transcription from promoters A2b and A2c and activates late transcription from promoter A3. Protein p6 is therefore involved in the early to late transcription switch. The formation of the nucleoprotein complex at the right end of the phage genome where the early promoter C2 is located affects local topology, which may contribute to the promoter repression. This Bacillus phage B103 (Bacteriophage B103) protein is Histone-like protein p6 (6).